Reading from the N-terminus, the 241-residue chain is Ubiquinone biosynthesis O-methyltransferase (241 aa).

Residues Arg46, Gly66, Asp87, and Met131 each coordinate S-adenosyl-L-methionine.

It belongs to the methyltransferase superfamily. UbiG/COQ3 family.

The enzyme catalyses a 3-demethylubiquinol + S-adenosyl-L-methionine = a ubiquinol + S-adenosyl-L-homocysteine + H(+). It carries out the reaction a 3-(all-trans-polyprenyl)benzene-1,2-diol + S-adenosyl-L-methionine = a 2-methoxy-6-(all-trans-polyprenyl)phenol + S-adenosyl-L-homocysteine + H(+). Its pathway is cofactor biosynthesis; ubiquinone biosynthesis. Functionally, O-methyltransferase that catalyzes the 2 O-methylation steps in the ubiquinone biosynthetic pathway. The chain is Ubiquinone biosynthesis O-methyltransferase from Bordetella pertussis (strain Tohama I / ATCC BAA-589 / NCTC 13251).